Consider the following 159-residue polypeptide: uncharacterized protein (159 aa).

3 helical membrane-spanning segments follow: residues Phe17–Ser37, Trp44–Ile64, and Phe67–Ala87.

Its subcellular location is the membrane. This is an uncharacterized protein from Saccharomyces cerevisiae (strain ATCC 204508 / S288c) (Baker's yeast).